Here is a 583-residue protein sequence, read N- to C-terminus: Long-chain-fatty-acid--AMP ligase FadD26 (583 aa).

It belongs to the ATP-dependent AMP-binding enzyme family.

The enzyme catalyses holo-[(phenol)carboxyphthiodiolenone synthase] + a long-chain fatty acid + ATP = a long-chain fatty acyl-[(phenol)carboxyphthiodiolenone synthase] + AMP + diphosphate. It carries out the reaction eicosanoate + holo-[(phenol)carboxyphthiodiolenone synthase] + ATP = icosanoyl-[(phenol)carboxyphthiodiolenone synthase] + AMP + diphosphate. The catalysed reaction is holo-[(phenol)carboxyphthiodiolenone synthase] + docosanoate + ATP = docosanoyl-[(phenol)carboxyphthiodiolenone synthase] + AMP + diphosphate. It participates in lipid metabolism; fatty acid biosynthesis. In terms of biological role, catalyzes the activation of long-chain fatty acids as acyl-adenylates (acyl-AMP), which are then transferred to the multifunctional polyketide synthase PpsA for further chain extension. Catalyzes the adenylation of the long-chain fatty acids eicosanoate (C20) or docosanoate (C22), and potentially the very-long-chain fatty acid lignocerate (C24). Involved in the biosynthesis of phthiocerol dimycocerosate (DIM A) and phthiodiolone dimycocerosate (DIM B). The protein is Long-chain-fatty-acid--AMP ligase FadD26 (fadD26) of Mycobacterium bovis (strain ATCC BAA-935 / AF2122/97).